The chain runs to 569 residues: Endonuclease/exonuclease/phosphatase family domain-containing protein 1 (569 aa).

A disordered region spans residues 1–20 (MGSTLGCHRSIPRDPSDLSH). Residue G2 is the site of N-myristoyl glycine attachment. The span at 11-20 (IPRDPSDLSH) shows a compositional bias: basic and acidic residues. S16, S21, and S25 each carry phosphoserine. In terms of domain architecture, HhH spans 38–67 (ERLNINTATEEELMTLPGVTRAVARSIVEY). Residues S106, S110, S160, and S173 each carry the phosphoserine modification. The tract at residues 200–225 (SRPPSTHTNGGLTFTAKPHPSPTSLS) is disordered. A compositionally biased stretch (polar residues) spans 202–211 (PPSTHTNGGL). A Phosphothreonine modification is found at T265. At S428 the chain carries Phosphoserine. The tract at residues 545–569 (SKKDAPRNGSGVALERSEANIKHER) is disordered. Residues 559–569 (ERSEANIKHER) are compositionally biased toward basic and acidic residues.

This chain is Endonuclease/exonuclease/phosphatase family domain-containing protein 1 (EEPD1), found in Homo sapiens (Human).